The sequence spans 704 residues: MVRKATKKTIKKVKQVEEFNDDDEIIEEIVEEIEEVVEQRDEVNDEFQEEEEELEDDDDDEDDEDEIVFTSIRTTATTTTPINQHNDKEKEKKKDKQEEYIDSDDDDDDDGDENYYLNNNNNNNNNINNNNNYNNNNYNNNNTPTEPIKTETIFYNPPIRKRNEINGTVNTVSGGKSSKNIIEKMGEQSWGDMYTPSKCLQISKQNCELQSKYYTEAQLERLSSEIRRNPSMASKSYHFLSLGLTTKINHQWIRALISMALLISLVAIIFYLPLPHLKHIIMSPTGPSIQTSKTTGEFDQFDFNNPSIATKLTAFKDNWRRFSIVGVSNFLCSNYNFNPIDYSDGGGDGGDGGNTSIPKEFSTVQELKNLKIFGSCILFGVILFVVWLFATRLAEKEIIIKSNLPLQFLHSILTLLVIPLLSMLFWSLVLLYFIQTLLIGNQVNGQEDIFYCVNHLSNSLSEISSFSPARELFLGSVGIVMRLVNYFYPLSIESLALHQSTLYDTKNVYQMKLVSFLWTIIVGSFIYHTFLISSYLYSIFHEYHPTTTTTTTTTINTTTNTTSNTSQQSNPLSKRLKSNQIDPSSFNLFSLDVKFLPSFIPEVLITQNFIIVFIWTIAASLLWIYGVPPNLHIHEGEIFFIFIALAPLIKSIYNLIIIEQKKDKINQVHNEISWKSEPEILELQRQRLEQDQLDQQQFDELIDN.

The tract at residues 37-145 (VEQRDEVNDE…NNYNNNNTPT (109 aa)) is disordered. The span at 43 to 67 (VNDEFQEEEEELEDDDDDEDDEDEI) shows a compositional bias: acidic residues. Over residues 85 to 99 (HNDKEKEKKKDKQEE) the composition is skewed to basic and acidic residues. Residues 100-113 (YIDSDDDDDDDGDE) show a composition bias toward acidic residues. Positions 114–142 (NYYLNNNNNNNNNINNNNNYNNNNYNNNN) are enriched in low complexity. The N-linked (GlcNAc...) asparagine glycan is linked to N166. A helical membrane pass occupies residues 255 to 275 (ALISMALLISLVAIIFYLPLP). N354 is a glycosylation site (N-linked (GlcNAc...) asparagine). Helical transmembrane passes span 370-390 (LKIF…WLFA), 414-434 (TLLV…LYFI), and 513-533 (LVSF…FLIS). Residues 550–565 (TTTTTINTTTNTTSNT) show a composition bias toward low complexity. Residues 550–576 (TTTTTINTTTNTTSNTSQQSNPLSKRL) are disordered. 3 N-linked (GlcNAc...) asparagine glycosylation sites follow: N556, N560, and N564. A compositionally biased stretch (polar residues) spans 566–576 (SQQSNPLSKRL). 2 helical membrane-spanning segments follow: residues 609–629 (FIIV…GVPP) and 638–658 (IFFI…LIII).

Its subcellular location is the membrane. The sequence is that of Transmembrane protein DDB_G0274347 from Dictyostelium discoideum (Social amoeba).